We begin with the raw amino-acid sequence, 346 residues long: Histidinol-phosphate aminotransferase (346 aa).

K209 carries the post-translational modification N6-(pyridoxal phosphate)lysine.

The protein belongs to the class-II pyridoxal-phosphate-dependent aminotransferase family. Histidinol-phosphate aminotransferase subfamily. In terms of assembly, homodimer. Requires pyridoxal 5'-phosphate as cofactor.

It catalyses the reaction L-histidinol phosphate + 2-oxoglutarate = 3-(imidazol-4-yl)-2-oxopropyl phosphate + L-glutamate. Its pathway is amino-acid biosynthesis; L-histidine biosynthesis; L-histidine from 5-phospho-alpha-D-ribose 1-diphosphate: step 7/9. This Vibrio campbellii (strain ATCC BAA-1116) protein is Histidinol-phosphate aminotransferase.